We begin with the raw amino-acid sequence, 527 residues long: Protein TIC 56, chloroplastic (527 aa).

Residues 1–48 (MSSMNFNPFQNWFEKPPNPVPSINFVSLADSFFPKSQSPNFASIGLPK) constitute a chloroplast transit peptide. Residues 43–67 (SIGLPKFSKKSPKPETAGTDEPGPY) form a disordered region. Position 350 is a deamidated asparagine (asparagine 350). The span at 491-508 (RREEELREEDLKHYSGRT) shows a compositional bias: basic and acidic residues. The disordered stretch occupies residues 491–527 (RREEELREEDLKHYSGRTDEDEEEEEEEDDDSNSKKD). Acidic residues predominate over residues 509–521 (DEDEEEEEEEDDD).

Part of the Tic complex. Component of the 1-MD complex, composed of TIC20-I, TIC214, TIC100 and TIC56. Interacts with the translocating preproteins. Hydrolysis of ATP is essential for the formation of this complex. The 1-MD complex interacts with TIC21.

The protein resides in the plastid. Its subcellular location is the chloroplast inner membrane. In terms of biological role, involved in protein precursor import into chloroplasts. May be part of an intermediate translocation complex acting as a protein-conducting channel at the inner envelope. This is Protein TIC 56, chloroplastic from Arabidopsis thaliana (Mouse-ear cress).